Here is a 170-residue protein sequence, read N- to C-terminus: F107 fimbrial protein (170 aa).

Residues 1–21 (MKRLVFISFVALSMTAGSAMA) form the signal peptide. Cys-37 and Cys-78 form a disulfide bridge.

Belongs to the fimbrial protein family.

Its subcellular location is the fimbrium. In terms of biological role, fimbriae (also called pili), polar filaments radiating from the surface of the bacterium to a length of 0.5-1.5 micrometers and numbering 100-300 per cell, enable bacteria to colonize the epithelium of specific host organs. This chain is F107 fimbrial protein (fedA), found in Escherichia coli.